The primary structure comprises 446 residues: ATP-dependent protease ATPase subunit HslU (446 aa).

Residues valine 18, 60–65 (GVGKTE), aspartate 259, glutamate 324, and arginine 396 contribute to the ATP site.

This sequence belongs to the ClpX chaperone family. HslU subfamily. As to quaternary structure, a double ring-shaped homohexamer of HslV is capped on each side by a ring-shaped HslU homohexamer. The assembly of the HslU/HslV complex is dependent on binding of ATP.

It localises to the cytoplasm. In terms of biological role, ATPase subunit of a proteasome-like degradation complex; this subunit has chaperone activity. The binding of ATP and its subsequent hydrolysis by HslU are essential for unfolding of protein substrates subsequently hydrolyzed by HslV. HslU recognizes the N-terminal part of its protein substrates and unfolds these before they are guided to HslV for hydrolysis. The polypeptide is ATP-dependent protease ATPase subunit HslU (Dechloromonas aromatica (strain RCB)).